The chain runs to 410 residues: UDP-N-acetylglucosamine--dolichyl-phosphate N-acetylglucosaminephosphotransferase (410 aa).

Residues 1 to 10 lie on the Lumenal side of the membrane; that stretch reads MWAFPELPLP. The helical transmembrane segment at 11 to 40 threads the bilayer; it reads LPLLVNLIGSLLGFVATVTLIPAFRSHFIA. Over 41-60 the chain is Cytoplasmic; that stretch reads ARLCGQDLNKLSQQQIPESQ. Residues 46–48 and E58 each bind UDP-N-acetyl-alpha-D-glucosamine; that span reads QDL. The helical transmembrane segment at 61–80 threads the bilayer; sequence GVISGAVFLIILFCFIPFPF. Residues 81-93 are Lumenal-facing; the sequence is LNCFVEEQCKAFP. A helical membrane pass occupies residues 94–120; it reads HHEFVALIGALLAICCMIFLGFADDVL. At 121 to 123 the chain is on the cytoplasmic side; it reads NLR. Residues 124–145 form a helical membrane-spanning segment; the sequence is WRHKLLLPTAASLPLLMVYFTN. K127 lines the dolichyl phosphate pocket. Residues 146-168 are Lumenal-facing; it reads FGNTTIVVPKPFRWILGLHLDLG. N-linked (GlcNAc...) asparagine glycosylation is present at N148. The helical transmembrane segment at 169 to 188 threads the bilayer; sequence ILYYVYMGLLAVFCTNAINI. 180 to 188 lines the dolichyl phosphate pocket; the sequence is VFCTNAINI. N187 is a Mg(2+) binding site. Over 189 to 194 the chain is Cytoplasmic; the sequence is LAGING. Residue N193 participates in UDP-N-acetyl-alpha-D-glucosamine binding. The helical transmembrane segment at 195 to 215 threads the bilayer; the sequence is LEAGQSLVISASIIVFNLVEL. The Lumenal segment spans residues 216-220; that stretch reads EGDYR. Residues 221 to 244 form a helical membrane-spanning segment; sequence DDHIFSLYFMIPFFFTTLGLLYHN. Residues 245-252 lie on the Cytoplasmic side of the membrane; it reads WYPSRVFV. The helical transmembrane segment at 253-271 threads the bilayer; it reads GDTFCYFAGMTFAVVGILG. D254 is a Mg(2+) binding site. At 272 to 273 the chain is on the lumenal side; sequence HF. A helical transmembrane segment spans residues 274–295; the sequence is SKTMLLFFMPQVFNFLYSLPQL. At 296-377 the chain is on the cytoplasmic side; that stretch reads FHIIPCPRHR…LLLKVFGPIH (82 aa). Position 303–305 (303–305) interacts with UDP-N-acetyl-alpha-D-glucosamine; it reads RHR. Residues 378–402 traverse the membrane as a helical segment; the sequence is ERNLTLLLLLLQVLSSAATFSIRYQ. Residues 403-410 are Lumenal-facing; it reads LVRLFYDV.

It belongs to the glycosyltransferase 4 family. In terms of assembly, homodimer. Mg(2+) is required as a cofactor.

The protein localises to the endoplasmic reticulum membrane. The catalysed reaction is a di-trans,poly-cis-dolichyl phosphate + UDP-N-acetyl-alpha-D-glucosamine = an N-acetyl-alpha-D-glucosaminyl-diphospho-di-trans,poly-cis-dolichol + UMP. Its pathway is protein modification; protein glycosylation. Its activity is regulated as follows. Inhibited by natural nucleoside antibiotic tunicamycin, which acts as a structural analog and competitor of UDP-GlcNAc. Functionally, UDP-N-acetylglucosamine--dolichyl-phosphate N-acetylglucosaminephosphotransferase that operates in the biosynthetic pathway of dolichol-linked oligosaccharides, the glycan precursors employed in protein asparagine (N)-glycosylation. The assembly of dolichol-linked oligosaccharides begins on the cytosolic side of the endoplasmic reticulum membrane and finishes in its lumen. The sequential addition of sugars to dolichol pyrophosphate produces dolichol-linked oligosaccharides containing fourteen sugars, including two GlcNAcs, nine mannoses and three glucoses. Once assembled, the oligosaccharide is transferred from the lipid to nascent proteins by oligosaccharyltransferases. Catalyzes the initial step of dolichol-linked oligosaccharide biosynthesis, transfering GlcNAc-1-P from cytosolic UDP-GlcNAc onto the carrier lipid dolichyl phosphate (P-dolichol), yielding GlcNAc-P-P-dolichol embedded in the cytoplasmic leaflet of the endoplasmic reticulum membrane. The sequence is that of UDP-N-acetylglucosamine--dolichyl-phosphate N-acetylglucosaminephosphotransferase from Mus musculus (Mouse).